A 218-amino-acid polypeptide reads, in one-letter code: Octanoyltransferase (218 aa).

Positions 31 to 206 (REAGDEVWLV…QLVKHLDYAE (176 aa)) constitute a BPL/LPL catalytic domain. Substrate contacts are provided by residues 70 to 77 (RGGQVTYH), 137 to 139 (SLG), and 150 to 152 (GLA). Cys-168 serves as the catalytic Acyl-thioester intermediate.

It belongs to the LipB family.

It localises to the cytoplasm. It catalyses the reaction octanoyl-[ACP] + L-lysyl-[protein] = N(6)-octanoyl-L-lysyl-[protein] + holo-[ACP] + H(+). Its pathway is protein modification; protein lipoylation via endogenous pathway; protein N(6)-(lipoyl)lysine from octanoyl-[acyl-carrier-protein]: step 1/2. Catalyzes the transfer of endogenously produced octanoic acid from octanoyl-acyl-carrier-protein onto the lipoyl domains of lipoate-dependent enzymes. Lipoyl-ACP can also act as a substrate although octanoyl-ACP is likely to be the physiological substrate. The protein is Octanoyltransferase of Pseudomonas syringae pv. tomato (strain ATCC BAA-871 / DC3000).